Consider the following 185-residue polypeptide: Somatotropin (185 aa).

An intrachain disulfide couples Cys52 to Cys158. Glu167 serves as a coordination point for Zn(2+). A disulfide bridge connects residues Cys175 and Cys183.

The protein belongs to the somatotropin/prolactin family.

The protein resides in the secreted. Its function is as follows. Growth hormone plays an important role in growth control and is involved in the regulation of several anabolic processes. Implicated as an osmoregulatory substance important for seawater adaptation. The chain is Somatotropin (gh) from Katsuwonus pelamis (Skipjack tuna).